The following is a 255-amino-acid chain: Complement C1q-like protein 3 (255 aa).

Residues 1 to 20 (MVLLLVILIPVLVSSAGTSA) form the signal peptide. Residues 39-109 (KAPSTAATPD…GLPGPPGAPG (71 aa)) form a disordered region. The Collagen-like domain maps to 61–111 (GPKGEAGRPGKAGPRGPPGEPGPPGPMGPPGEKGEPGRQGLPGPPGAPGLN). Residues 75–89 (RGPPGEPGPPGPMGP) are compositionally biased toward pro residues. Residues 122-255 (STVPKIAFYA…TFSGFIIYAD (134 aa)) enclose the C1q domain.

In terms of assembly, forms homooligomers. Interacts with ADGRB3. Interacts with C1QL2 and C1QL4, when proteins are coexpressed; this interaction does not occur after secretion. In terms of tissue distribution, highly expressed in adipose tissue, with expression levels at least 2 orders of magnitude higher than in other tissues, including brain and kidney.

Its subcellular location is the secreted. Its function is as follows. May regulate the number of excitatory synapses that are formed on hippocampus neurons. Has no effect on inhibitory synapses. Plays a role in glucose homeostasis. Via AMPK signaling pathway, stimulates glucose uptake in adipocytes, myotubes and hepatocytes and enhances insulin-stimulated glucose uptake. In a hepatoma cell line, reduces the expression of gluconeogenic enzymes G6PC1 and PCK1 and hence decreases de novo glucose production. The polypeptide is Complement C1q-like protein 3 (C1QL3) (Homo sapiens (Human)).